The primary structure comprises 443 residues: F-box only protein 39 (443 aa).

The F-box domain occupies 13–59 (QSCWATLPDVCLRRVFWWLGDRDRSRAALVCRKWNQIMYSADLWRYR).

As to quaternary structure, directly interacts with SKP1 and CUL1.

Substrate-recognition component of the SCF (SKP1-CUL1-F-box protein)-type E3 ubiquitin ligase complex. This chain is F-box only protein 39 (Fbxo39), found in Mus musculus (Mouse).